Here is a 187-residue protein sequence, read N- to C-terminus: MAQTTNDIKNGSILNLDGQLWQVIKFQHVKPGKGPAFVRTTIKNVLSGKIVDKTFNAGMKMDFETVDNRTLQYSYEDGDNFVFMDMTTFDQIMIPKTLVGDKAKYLLEGTDCIVSFHDGQPLSVELPASVVLTITHTEPGLQGNRSNAGTKPATVETGAEIQVPLFIGEGEKVKVNTDDGSYLGREN.

Belongs to the elongation factor P family.

Its subcellular location is the cytoplasm. It functions in the pathway protein biosynthesis; polypeptide chain elongation. Functionally, involved in peptide bond synthesis. Stimulates efficient translation and peptide-bond synthesis on native or reconstituted 70S ribosomes in vitro. Probably functions indirectly by altering the affinity of the ribosome for aminoacyl-tRNA, thus increasing their reactivity as acceptors for peptidyl transferase. In Bifidobacterium animalis subsp. lactis (strain AD011), this protein is Elongation factor P.